The primary structure comprises 905 residues: Protein translocase subunit SecA (905 aa).

ATP-binding positions include Q87, 105–109 (GEGKT), and D509. The Zn(2+) site is built by C890, C892, C901, and H902.

This sequence belongs to the SecA family. In terms of assembly, monomer and homodimer. Part of the essential Sec protein translocation apparatus which comprises SecA, SecYEG and auxiliary proteins SecDF-YajC and YidC. Zn(2+) is required as a cofactor.

The protein resides in the cell inner membrane. It is found in the cytoplasm. The catalysed reaction is ATP + H2O + cellular proteinSide 1 = ADP + phosphate + cellular proteinSide 2.. In terms of biological role, part of the Sec protein translocase complex. Interacts with the SecYEG preprotein conducting channel. Has a central role in coupling the hydrolysis of ATP to the transfer of proteins into and across the cell membrane, serving both as a receptor for the preprotein-SecB complex and as an ATP-driven molecular motor driving the stepwise translocation of polypeptide chains across the membrane. This chain is Protein translocase subunit SecA, found in Acinetobacter baylyi (strain ATCC 33305 / BD413 / ADP1).